Consider the following 318-residue polypeptide: Homoserine kinase (318 aa).

97-107 (PIGSGLGSSAC) lines the ATP pocket.

The protein belongs to the GHMP kinase family. Homoserine kinase subfamily.

The protein resides in the cytoplasm. It catalyses the reaction L-homoserine + ATP = O-phospho-L-homoserine + ADP + H(+). The protein operates within amino-acid biosynthesis; L-threonine biosynthesis; L-threonine from L-aspartate: step 4/5. Its function is as follows. Catalyzes the ATP-dependent phosphorylation of L-homoserine to L-homoserine phosphate. The polypeptide is Homoserine kinase (Photobacterium profundum (strain SS9)).